We begin with the raw amino-acid sequence, 361 residues long: Phospho-N-acetylmuramoyl-pentapeptide-transferase (361 aa).

A run of 10 helical transmembrane segments spans residues 25–45, 73–93, 98–118, 139–159, 168–188, 200–220, 237–257, 264–284, 289–309, and 339–359; these read RGILAALTALFLSLWMGPAVI, TMGGSLILLTVTLSVLLWGDL, VWLVLAVMICFGAIGWYDDWI, IFGLAAGLFLYYTADVPAAIT, IALPLAGVSFVVIAYFWIVGF, GLAIMPTVLVACALGVFAYAS, AGELIIICSAIAGAGLGFLWF, VFMGDIGALSLGAVLGTIAVI, MVLVIMGGVFVIETLSVIIQV, and VIVRFWIISVVLVLIGLATLK.

Belongs to the glycosyltransferase 4 family. MraY subfamily. Mg(2+) is required as a cofactor.

It is found in the cell inner membrane. It catalyses the reaction UDP-N-acetyl-alpha-D-muramoyl-L-alanyl-gamma-D-glutamyl-meso-2,6-diaminopimeloyl-D-alanyl-D-alanine + di-trans,octa-cis-undecaprenyl phosphate = di-trans,octa-cis-undecaprenyl diphospho-N-acetyl-alpha-D-muramoyl-L-alanyl-D-glutamyl-meso-2,6-diaminopimeloyl-D-alanyl-D-alanine + UMP. Its pathway is cell wall biogenesis; peptidoglycan biosynthesis. Functionally, catalyzes the initial step of the lipid cycle reactions in the biosynthesis of the cell wall peptidoglycan: transfers peptidoglycan precursor phospho-MurNAc-pentapeptide from UDP-MurNAc-pentapeptide onto the lipid carrier undecaprenyl phosphate, yielding undecaprenyl-pyrophosphoryl-MurNAc-pentapeptide, known as lipid I. In Xanthomonas oryzae pv. oryzae (strain PXO99A), this protein is Phospho-N-acetylmuramoyl-pentapeptide-transferase.